A 116-amino-acid polypeptide reads, in one-letter code: Large ribosomal subunit protein bL19 (116 aa).

Belongs to the bacterial ribosomal protein bL19 family.

In terms of biological role, this protein is located at the 30S-50S ribosomal subunit interface and may play a role in the structure and function of the aminoacyl-tRNA binding site. The chain is Large ribosomal subunit protein bL19 from Solidesulfovibrio magneticus (strain ATCC 700980 / DSM 13731 / RS-1) (Desulfovibrio magneticus).